Reading from the N-terminus, the 474-residue chain is Mitochondrial import inner membrane translocase subunit TIM44-1 (474 aa).

The transit peptide at Met1 to Ser54 directs the protein to the mitochondrion. A coiled-coil region spans residues Glu68–Leu88. Residues Val132 to Asn143 show a composition bias toward basic and acidic residues. A disordered region spans residues Val132–Thr165. Residues Glu145–Thr165 show a composition bias toward polar residues.

This sequence belongs to the Tim44 family. In terms of assembly, probable component of the PAM complex at least composed of a mitochondrial HSP70 protein, TIMM44 and TIMM14. The complex interacts with the TIMM23 component of the TIM17:23 complex. In terms of tissue distribution, expressed in roots, flowers, young cotyledons and leaves.

It localises to the mitochondrion inner membrane. Its function is as follows. Essential component of the PAM complex, a complex required for the translocation of transit peptide-containing proteins from the inner membrane into the mitochondrial matrix in an ATP-dependent manner. Recruits mitochondrial HSP70 to drive protein translocation into the matrix using ATP as an energy source. This is Mitochondrial import inner membrane translocase subunit TIM44-1 (TIM44-1) from Arabidopsis thaliana (Mouse-ear cress).